Consider the following 137-residue polypeptide: Actin-depolymerizing factor 12 (137 aa).

Position 6 is a phosphoserine (serine 6). One can recognise an ADF-H domain in the interval glycine 7–leucine 137.

It belongs to the actin-binding proteins ADF family. In terms of tissue distribution, specifically expressed in pollen.

The protein resides in the cytoplasm. Its subcellular location is the cytoskeleton. Functionally, actin-depolymerizing protein. Severs actin filaments (F-actin) and binds to actin monomers. The protein is Actin-depolymerizing factor 12 of Arabidopsis thaliana (Mouse-ear cress).